The chain runs to 348 residues: Oxygen-dependent coproporphyrinogen-III oxidase (348 aa).

Serine 104 provides a ligand contact to substrate. A divalent metal cation is bound by residues histidine 108 and histidine 118. The active-site Proton donor is histidine 118. 120–122 contacts substrate; it reads NYR. Positions 152 and 182 each coordinate a divalent metal cation. Residues 272–307 form an important for dimerization region; it reads YAEFNLVWDRGTIFGLQTNGRTESILMSLPPLARWE.

The protein belongs to the aerobic coproporphyrinogen-III oxidase family. In terms of assembly, homodimer. The cofactor is a divalent metal cation.

It is found in the cytoplasm. It carries out the reaction coproporphyrinogen III + O2 + 2 H(+) = protoporphyrinogen IX + 2 CO2 + 2 H2O. It participates in porphyrin-containing compound metabolism; protoporphyrin-IX biosynthesis; protoporphyrinogen-IX from coproporphyrinogen-III (O2 route): step 1/1. Functionally, involved in the heme and chlorophyll biosynthesis. Catalyzes the aerobic oxidative decarboxylation of propionate groups of rings A and B of coproporphyrinogen-III to yield the vinyl groups in protoporphyrinogen-IX. This Prochlorococcus marinus (strain NATL2A) protein is Oxygen-dependent coproporphyrinogen-III oxidase.